The chain runs to 146 residues: Hemoglobin subunit beta (146 aa).

V1 is subject to N-acetylvaline. The 145-residue stretch at 2–146 (HLSGEEKGAV…VATALAHKYH (145 aa)) folds into the Globin domain. The residue at position 12 (T12) is a Phosphothreonine. S44 is modified (phosphoserine). The residue at position 59 (K59) is an N6-acetyllysine. H63 contributes to the heme b binding site. An N6-acetyllysine modification is found at K82. H92 is a binding site for heme b. Residue C93 is modified to S-nitrosocysteine. Position 144 is an N6-acetyllysine (K144).

It belongs to the globin family. As to quaternary structure, heterotetramer of two alpha chains and two beta chains. Red blood cells.

Functionally, involved in oxygen transport from the lung to the various peripheral tissues. The protein is Hemoglobin subunit beta (HBB) of Tadarida brasiliensis (Brazilian free-tailed bat).